We begin with the raw amino-acid sequence, 541 residues long: Chaperonin GroEL 2 (541 aa).

Residues 30 to 33 (TLGP), lysine 51, 87 to 91 (DGTTT), glycine 415, and aspartate 496 each bind ATP.

The protein belongs to the chaperonin (HSP60) family. As to quaternary structure, forms a cylinder of 14 subunits composed of two heptameric rings stacked back-to-back. Interacts with the co-chaperonin GroES.

It localises to the cytoplasm. It carries out the reaction ATP + H2O + a folded polypeptide = ADP + phosphate + an unfolded polypeptide.. In terms of biological role, together with its co-chaperonin GroES, plays an essential role in assisting protein folding. The GroEL-GroES system forms a nano-cage that allows encapsulation of the non-native substrate proteins and provides a physical environment optimized to promote and accelerate protein folding. The protein is Chaperonin GroEL 2 of Bradyrhizobium sp. (strain BTAi1 / ATCC BAA-1182).